Reading from the N-terminus, the 1013-residue chain is EF-hand calcium-binding domain-containing protein 6 (1013 aa).

5 consecutive EF-hand domains span residues 20-55, 145-180, 251-286, 287-322, and 352-387; these read KNIKTVMKAFKLIDVNKTGLVRPQELRRVLETFCLK, KSYEKIEKALSAGDPCKGGYVSFNYLKIVLDTFIYQ, DRSASLKKALLIINTKPDGPITREEFRYILNCVAIK, LSDSEFKELMQILDPGDTGVVNTSMFIDLIEENCRM, and RNLQAFYNMLRSYDLGDTGLIGRNNFKKIMHVFCPF. The segment at 441–460 is disordered; sequence QKDEQQQPDLSERTKPTEDK. EF-hand domains are found at residues 482 to 517, 589 to 624, 695 to 730, 731 to 766, 812 to 847, and 917 to 952; these read QQDPAFKKRFLDFSKEPNGKINVHDFRKILEDTGMP, ESFRDPYSAFFKTDVDRDGIINMHDLHRLLLHLLLN, NRWSDLSKNFLETDNEGNGILRRRDIKNALYGFDIP, LTPREFEKLWARYNTEGKGHITYQEFLQKLGINYSP, DLHQDISKAFTKIDKSKTNYISICKMQKVLEECGCS, and SSQLALSTAFSALDKEDTGFVKATEFGQVLKDFCYK. Positions 602, 604, 606, and 613 each coordinate Ca(2+). T732 carries the post-translational modification Phosphothreonine.

As to quaternary structure, microtubule inner protein component of sperm flagellar doublet microtubules. Binds PARK7. Part of a ternary complex containing PARK7, EFCAB6/DJBP and AR.

It is found in the nucleus. Its subcellular location is the cytoplasm. It localises to the cytoskeleton. The protein resides in the flagellum axoneme. In terms of biological role, negatively regulates the androgen receptor by recruiting histone deacetylase complex, and protein DJ-1 antagonizes this inhibition by abrogation of this complex. Microtubule inner protein (MIP) part of the dynein-decorated doublet microtubules (DMTs) in cilia axoneme, which is required for motile cilia beating. This is EF-hand calcium-binding domain-containing protein 6 (EFCAB6) from Pongo abelii (Sumatran orangutan).